A 117-amino-acid polypeptide reads, in one-letter code: Ribonuclease P protein component 4 (117 aa).

The Zn(2+) site is built by cysteine 63, cysteine 66, cysteine 92, and cysteine 95.

It belongs to the eukaryotic/archaeal RNase P protein component 4 family. Consists of a catalytic RNA component and at least 4 protein subunits. Forms a subcomplex with Rnp1 which stimulates the catalytic RNA. It depends on Zn(2+) as a cofactor.

The protein localises to the cytoplasm. It carries out the reaction Endonucleolytic cleavage of RNA, removing 5'-extranucleotides from tRNA precursor.. Functionally, part of ribonuclease P, a protein complex that generates mature tRNA molecules by cleaving their 5'-ends. The RNA is catalytic, but its KM for pre-tRNA is 170-fold decreased in the presence of the 4 known protein subunits (Rnp1-4). The protein subunits also decrease the amount of Mg(2+) needed for activity. The protein is Ribonuclease P protein component 4 of Pyrococcus furiosus (strain ATCC 43587 / DSM 3638 / JCM 8422 / Vc1).